A 437-amino-acid chain; its full sequence is Cytochrome c biogenesis protein Ccs1 (437 aa).

The next 3 membrane-spanning stretches (helical) occupy residues 23–43 (LQFS…GTII), 82–102 (TWWF…CSLS), and 168–188 (LAPI…VLGL).

The protein belongs to the Ccs1/CcsB family. As to quaternary structure, may interact with CcsA.

It localises to the plastid. The protein localises to the chloroplast thylakoid membrane. Functionally, required during biogenesis of c-type cytochromes (cytochrome c6 and cytochrome f) at the step of heme attachment. This chain is Cytochrome c biogenesis protein Ccs1, found in Porphyra purpurea (Red seaweed).